A 694-amino-acid polypeptide reads, in one-letter code: uncharacterized protein (694 aa).

A coiled-coil region spans residues 15 to 51 (HKEKMELLDQFDNERKEWESQWKIMQKKIEELCREVK). Disordered regions lie at residues 259 to 286 (LKRNETPPVPPPRSTSRNFPSSDSEQAY), 461 to 490 (QNHSCSKSSEDLKPCDTSSTHTGSISQSND), and 643 to 680 (NASHGKGFSRPARPANRRLPSRWASRSPSAPPALRRTT). Composition is skewed to polar residues over residues 272-283 (STSRNFPSSDSE) and 476-490 (DTSSTHTGSISQSND). The span at 663–677 (SRWASRSPSAPPALR) shows a compositional bias: low complexity.

This is an uncharacterized protein from Homo sapiens (Human).